The following is a 278-amino-acid chain: Indole-3-glycerol phosphate synthase (278 aa).

The protein belongs to the TrpC family.

It carries out the reaction 1-(2-carboxyphenylamino)-1-deoxy-D-ribulose 5-phosphate + H(+) = (1S,2R)-1-C-(indol-3-yl)glycerol 3-phosphate + CO2 + H2O. It functions in the pathway amino-acid biosynthesis; L-tryptophan biosynthesis; L-tryptophan from chorismate: step 4/5. The sequence is that of Indole-3-glycerol phosphate synthase from Pseudomonas paraeruginosa (strain DSM 24068 / PA7) (Pseudomonas aeruginosa (strain PA7)).